Consider the following 142-residue polypeptide: Large ribosomal subunit protein uL13 (142 aa).

This sequence belongs to the universal ribosomal protein uL13 family. Part of the 50S ribosomal subunit.

This protein is one of the early assembly proteins of the 50S ribosomal subunit, although it is not seen to bind rRNA by itself. It is important during the early stages of 50S assembly. This is Large ribosomal subunit protein uL13 from Shewanella oneidensis (strain ATCC 700550 / JCM 31522 / CIP 106686 / LMG 19005 / NCIMB 14063 / MR-1).